Consider the following 475-residue polypeptide: Methionine aminopeptidase 2-1 (475 aa).

Over residues 1–12 the composition is skewed to basic and acidic residues; the sequence is MGSKSPEGHRQT. The interval 1-97 is disordered; it reads MGSKSPEGHR…LKQSSPPRVL (97 aa). Residues 44 to 57 show a composition bias toward acidic residues; that stretch reads NLDDDNDDDGEANE. Basic residues predominate over residues 70–83; that stretch reads KKKKRKRSKKKTKK. A substrate-binding site is contributed by His-211. Residues Asp-232, Asp-243, and His-312 each contribute to the a divalent metal cation site. His-320 serves as a coordination point for substrate. Residues Glu-345 and Glu-456 each coordinate a divalent metal cation.

It belongs to the peptidase M24A family. Methionine aminopeptidase eukaryotic type 2 subfamily. It depends on Co(2+) as a cofactor. Requires Zn(2+) as cofactor. The cofactor is Mn(2+). Fe(2+) serves as cofactor.

The protein localises to the cytoplasm. It carries out the reaction Release of N-terminal amino acids, preferentially methionine, from peptides and arylamides.. In terms of biological role, cotranslationally removes the N-terminal methionine from nascent proteins. The N-terminal methionine is often cleaved when the second residue in the primary sequence is small and uncharged (Met-Ala-, Cys, Gly, Pro, Ser, Thr, or Val). The polypeptide is Methionine aminopeptidase 2-1 (Aspergillus niger (strain ATCC MYA-4892 / CBS 513.88 / FGSC A1513)).